A 788-amino-acid chain; its full sequence is 5-methyltetrahydropteroyltriglutamate--homocysteine methyltransferase (788 aa).

5-methyltetrahydropteroyltri-L-glutamate-binding positions include 24–27 and K140; that span reads RELK. L-homocysteine is bound by residues 463–465 and E516; that span reads IGS. Residues 463–465 and E516 each bind L-methionine; that span reads IGS. Residues 547 to 548 and W593 each bind 5-methyltetrahydropteroyltri-L-glutamate; that span reads RC. L-homocysteine is bound at residue D631. D631 contributes to the L-methionine binding site. E637 lines the 5-methyltetrahydropteroyltri-L-glutamate pocket. Residues H673, C675, and E697 each coordinate Zn(2+). Residue H726 is the Proton donor of the active site. C758 contacts Zn(2+).

The protein belongs to the vitamin-B12 independent methionine synthase family. Zn(2+) serves as cofactor.

The catalysed reaction is 5-methyltetrahydropteroyltri-L-glutamate + L-homocysteine = tetrahydropteroyltri-L-glutamate + L-methionine. Its pathway is amino-acid biosynthesis; L-methionine biosynthesis via de novo pathway; L-methionine from L-homocysteine (MetE route): step 1/1. Catalyzes the transfer of a methyl group from 5-methyltetrahydrofolate to homocysteine resulting in methionine formation. The protein is 5-methyltetrahydropteroyltriglutamate--homocysteine methyltransferase of Rhodopseudomonas palustris (strain TIE-1).